The following is an 88-amino-acid chain: Sec-independent protein translocase protein TatA (88 aa).

The chain crosses the membrane as a helical span at residues 1 to 21 (MGGASIWHWIVVGVIVMLLFG). A disordered region spans residues 62 to 88 (TEPVRTLPPHPTEPAPATHATVDRKVV).

The protein belongs to the TatA/E family. As to quaternary structure, the Tat system comprises two distinct complexes: a TatABC complex, containing multiple copies of TatA, TatB and TatC subunits, and a separate TatA complex, containing only TatA subunits. Substrates initially bind to the TatABC complex, which probably triggers association of the separate TatA complex to form the active translocon.

The protein resides in the cell inner membrane. Its function is as follows. Part of the twin-arginine translocation (Tat) system that transports large folded proteins containing a characteristic twin-arginine motif in their signal peptide across membranes. TatA could form the protein-conducting channel of the Tat system. This is Sec-independent protein translocase protein TatA from Methylobacterium sp. (strain 4-46).